The primary structure comprises 22 residues: Unknown protein 10 (22 aa).

In Pseudotsuga menziesii (Douglas-fir), this protein is Unknown protein 10.